A 129-amino-acid polypeptide reads, in one-letter code: Small ribosomal subunit protein uS11 (129 aa).

It belongs to the universal ribosomal protein uS11 family. As to quaternary structure, part of the 30S ribosomal subunit. Interacts with proteins S7 and S18. Binds to IF-3.

Functionally, located on the platform of the 30S subunit, it bridges several disparate RNA helices of the 16S rRNA. Forms part of the Shine-Dalgarno cleft in the 70S ribosome. The protein is Small ribosomal subunit protein uS11 of Hamiltonella defensa subsp. Acyrthosiphon pisum (strain 5AT).